A 298-amino-acid polypeptide reads, in one-letter code: Acetyl-coenzyme A carboxylase carboxyl transferase subunit beta (298 aa).

Positions 1–21 (MNQEVKSGKVLSPSTPWTQRP) are disordered. Residues 41 to 298 (PTIECPECHA…RLVSKLMNLP (258 aa)) form the CoA carboxyltransferase N-terminal domain. Zn(2+)-binding residues include cysteine 45, cysteine 48, cysteine 64, and cysteine 67. The C4-type zinc-finger motif lies at 45–67 (CPECHALVTRTAISFNAYVCPQC).

Belongs to the AccD/PCCB family. Acetyl-CoA carboxylase is a heterohexamer composed of biotin carboxyl carrier protein (AccB), biotin carboxylase (AccC) and two subunits each of ACCase subunit alpha (AccA) and ACCase subunit beta (AccD). It depends on Zn(2+) as a cofactor.

The protein localises to the cytoplasm. It catalyses the reaction N(6)-carboxybiotinyl-L-lysyl-[protein] + acetyl-CoA = N(6)-biotinyl-L-lysyl-[protein] + malonyl-CoA. Its pathway is lipid metabolism; malonyl-CoA biosynthesis; malonyl-CoA from acetyl-CoA: step 1/1. Its function is as follows. Component of the acetyl coenzyme A carboxylase (ACC) complex. Biotin carboxylase (BC) catalyzes the carboxylation of biotin on its carrier protein (BCCP) and then the CO(2) group is transferred by the transcarboxylase to acetyl-CoA to form malonyl-CoA. The chain is Acetyl-coenzyme A carboxylase carboxyl transferase subunit beta from Acinetobacter baumannii (strain AYE).